A 322-amino-acid chain; its full sequence is Lipoyl synthase (322 aa).

The [4Fe-4S] cluster site is built by Cys-68, Cys-73, Cys-79, Cys-94, Cys-98, Cys-101, and Ser-309. In terms of domain architecture, Radical SAM core spans 80–298 (FNHGTASFMI…RVAGVEMGFS (219 aa)).

Belongs to the radical SAM superfamily. Lipoyl synthase family. The cofactor is [4Fe-4S] cluster.

The protein localises to the cytoplasm. It carries out the reaction [[Fe-S] cluster scaffold protein carrying a second [4Fe-4S](2+) cluster] + N(6)-octanoyl-L-lysyl-[protein] + 2 oxidized [2Fe-2S]-[ferredoxin] + 2 S-adenosyl-L-methionine + 4 H(+) = [[Fe-S] cluster scaffold protein] + N(6)-[(R)-dihydrolipoyl]-L-lysyl-[protein] + 4 Fe(3+) + 2 hydrogen sulfide + 2 5'-deoxyadenosine + 2 L-methionine + 2 reduced [2Fe-2S]-[ferredoxin]. Its pathway is protein modification; protein lipoylation via endogenous pathway; protein N(6)-(lipoyl)lysine from octanoyl-[acyl-carrier-protein]: step 2/2. Catalyzes the radical-mediated insertion of two sulfur atoms into the C-6 and C-8 positions of the octanoyl moiety bound to the lipoyl domains of lipoate-dependent enzymes, thereby converting the octanoylated domains into lipoylated derivatives. This Idiomarina loihiensis (strain ATCC BAA-735 / DSM 15497 / L2-TR) protein is Lipoyl synthase.